Reading from the N-terminus, the 399-residue chain is MDFSNTYRNYGEVVDFPEDFLSDYVPTVKSEPEPAAIAPSVCEPPISTTRNYGTDFGRASSMCGSSSSSSSSSYSSGSSPNYLTENGGDTEEPRFEELVSRKMSFDSENVAQVSNQMDYARDTYADSRIPFASIDSNDALLPYPVNNYVAALPVPVPAKKSRGRTAPRTPKSLETSKPGRGVKRPASKEIDAKDLGIGDLSAHMNRQIGDDEELDTQLIAHRILDELKEQCIPQASLAVKVLGRSQGTLSDLLRKPKPWGIMKNGRGTFQRMANWLDLDPVVRRALCFMKKEDVARITGMAEPTPAKRARQTTPSDERIRRFTFTQTQLDSLHTVFQQQDRPNREMQQALSATLKLNRSTVGNFFMNARRRLPKAAPVSQNLVAEHAIDHNQPGPSHHY.

Disordered regions lie at residues 32–91 and 158–187; these read PEPA…GDTE and AKKS…RPAS. A compositionally biased stretch (low complexity) spans 60-79; the sequence is SSMCGSSSSSSSSSYSSGSS. Positions 205–291 form a DNA-binding region, CUT; sequence NRQIGDDEEL…VRRALCFMKK (87 aa). Positions 315–374 form a DNA-binding region, homeobox; the sequence is SDERIRRFTFTQTQLDSLHTVFQQQDRPNREMQQALSATLKLNRSTVGNFFMNARRRLPK.

This sequence belongs to the CUT homeobox family. As to expression, expressed in hermaphrodite gonads.

It localises to the nucleus. It is found in the chromosome. Functionally, transcriptional regulator which is involved in the sex determination and X chromosome dosage compensation pathways. Directly binds to 5'-ATTGAT-3' sites in the promoter of sex-determining factor xol-1 to negatively regulate its expression and promote hermaphrodite development. Associates with condensed DNA during mitosis. This chain is Homeobox protein ceh-39, found in Caenorhabditis elegans.